The following is a 129-amino-acid chain: MAKEATRVRRRERKNIVSGVAHVNASFNNTMITITDAQGNTISWSSAGAMGFKGSRKSTPYAAQVAAEDAGRKAAEHGMRTLEVEVSGPGSGRESALRALQAAGFTVTSIRDVTPIPHNGCRPRKRRRV.

This sequence belongs to the universal ribosomal protein uS11 family. As to quaternary structure, part of the 30S ribosomal subunit. Interacts with proteins S7 and S18. Binds to IF-3.

In terms of biological role, located on the platform of the 30S subunit, it bridges several disparate RNA helices of the 16S rRNA. Forms part of the Shine-Dalgarno cleft in the 70S ribosome. In Methylobacterium nodulans (strain LMG 21967 / CNCM I-2342 / ORS 2060), this protein is Small ribosomal subunit protein uS11.